Here is a 67-residue protein sequence, read N- to C-terminus: Large ribosomal subunit protein bL35 (67 aa).

The disordered stretch occupies residues 22–45 (GKIKRWKSGGAHYNTKKSSKRKRH). Residues 35 to 45 (NTKKSSKRKRH) are compositionally biased toward basic residues.

This sequence belongs to the bacterial ribosomal protein bL35 family.

In Aquifex aeolicus (strain VF5), this protein is Large ribosomal subunit protein bL35.